The sequence spans 661 residues: Cyclic di-GMP phosphodiesterase PdeR (661 aa).

Positions 109-179 constitute a PAS domain; it reads GLSFAEQVVS…RRNNRVFFRS (71 aa). A GGDEF domain is found at 265–397; sequence NKVGVVYLDL…GRGQFCVFTP (133 aa). The 253-residue stretch at 406–658 folds into the EAL domain; sequence YLWLDTNLRK…AFERWYKRYL (253 aa).

In terms of assembly, interacts with DgcM and MlrA.

The enzyme catalyses 3',3'-c-di-GMP + H2O = 5'-phosphoguanylyl(3'-&gt;5')guanosine + H(+). Its function is as follows. Part of a signaling cascade that regulates curli biosynthesis. The cascade is composed of two cyclic-di-GMP (c-di-GMP) control modules, in which c-di-GMP controlled by the DgcE/PdeH pair (module I) regulates the activity of the DgcM/PdeR pair (module II), which in turn regulates activity of the transcription factor MlrA and expression of the master biofilm regulator csgD. PdeR acts as a trigger enzyme that connects modules I and II. It inhibits DgcM and MlrA by direct interaction. Inhibition is relieved when PdeR binds and degrades c-di-GMP generated by module I. The protein is Cyclic di-GMP phosphodiesterase PdeR of Escherichia coli (strain K12).